A 216-amino-acid chain; its full sequence is Putative flagellar filament outer layer-like protein (216 aa).

The disordered stretch occupies residues 1 to 22; the sequence is MFAQDAAQTGEQTTQNQGENGN. Residues 8–22 are compositionally biased toward low complexity; that stretch reads QTGEQTTQNQGENGN.

Its subcellular location is the periplasmic flagellum. The protein resides in the periplasm. Functionally, might be part of the flagella. This is Putative flagellar filament outer layer-like protein (flaAL) from Brachyspira hyodysenteriae (strain ATCC 49526 / WA1).